Here is a 218-residue protein sequence, read N- to C-terminus: Small ribosomal subunit protein uS3c (218 aa).

The KH type-2 domain occupies 47–118 (IQKTIKISSG…KLNIAITRIA (72 aa)).

This sequence belongs to the universal ribosomal protein uS3 family. Part of the 30S ribosomal subunit.

It is found in the plastid. The protein localises to the chloroplast. The protein is Small ribosomal subunit protein uS3c (rps3) of Lotus japonicus (Lotus corniculatus var. japonicus).